Here is an 86-residue protein sequence, read N- to C-terminus: Defensin-like protein a (86 aa).

Positions 1–23 are cleaved as a signal peptide; sequence MRCSVLFVVSYVIMSLLISHVQG. Cystine bridges form between cysteine 33-cysteine 81, cysteine 43-cysteine 67, cysteine 51-cysteine 76, and cysteine 65-cysteine 78.

The protein belongs to the DEFL family. As to expression, expressed specifically in anthers.

It localises to the secreted. Its function is as follows. Involved in self-incompatibility. The sequence is that of Defensin-like protein a (SCRa) from Arabidopsis lyrata (Lyre-leaved rock-cress).